We begin with the raw amino-acid sequence, 206 residues long: Small ribosomal subunit protein uS4 (206 aa).

Residues 15–46 (MGENIWGRPKSPVNKREYGPGQHGQRRKNKLS) form a disordered region. In terms of domain architecture, S4 RNA-binding spans 94-154 (RRLDAIVYRA…EKSRQLALVL (61 aa)).

Belongs to the universal ribosomal protein uS4 family. In terms of assembly, part of the 30S ribosomal subunit. Contacts protein S5. The interaction surface between S4 and S5 is involved in control of translational fidelity.

Functionally, one of the primary rRNA binding proteins, it binds directly to 16S rRNA where it nucleates assembly of the body of the 30S subunit. With S5 and S12 plays an important role in translational accuracy. The protein is Small ribosomal subunit protein uS4 of Cereibacter sphaeroides (strain ATCC 17029 / ATH 2.4.9) (Rhodobacter sphaeroides).